A 726-amino-acid polypeptide reads, in one-letter code: Methionine--tRNA ligase (726 aa).

Residues 12-22 carry the 'HIGH' region motif; that stretch reads PYVNNIPHLGN. Positions 143, 146, 155, and 158 each coordinate Zn(2+). Residues 330-334 carry the 'KMSKS' region motif; that stretch reads KFSKS. K333 serves as a coordination point for ATP. The region spanning 562–667 is the tRNA-binding domain; sequence FSEQICLKTV…DNPIPGERVI (106 aa).

The protein belongs to the class-I aminoacyl-tRNA synthetase family. MetG type 1 subfamily. As to quaternary structure, homodimer. Zn(2+) serves as cofactor.

The protein localises to the cytoplasm. It catalyses the reaction tRNA(Met) + L-methionine + ATP = L-methionyl-tRNA(Met) + AMP + diphosphate. In terms of biological role, is required not only for elongation of protein synthesis but also for the initiation of all mRNA translation through initiator tRNA(fMet) aminoacylation. This Borrelia duttonii (strain Ly) protein is Methionine--tRNA ligase.